The chain runs to 443 residues: MPCTCGNWRRWIRPLVVLLYIVGLIVGVPICIWKLQKMEVGVHTKAWFIAGIFVLMTIPISLWGILQHLVHYTQPELQKPIIRILWMVPIYSVDSWIALKYPDIAIYVDTCRECYEAYVIYNFMIFLLNYLTNRCPNLALVLEAKDQQRHLPPLCCCPPWAMGDVLLFRCKLGVLQYTVVRPVTTVIALICQLTGVYGEGDFSVKNAWTYLVIINNVSQVFAMYCLVLFYKVLKEELNPIQPVGKFLCVKMVVFVSFWQAVFIAILVKAGVISNTWEWKKVQDVATGLQDFIICVEMFLAAVAHHFSFTYKPYVQEAEEGSCFDSFLAMWDISDIRADISEQVRNVGRTVLGRPRKMFFNDDLEQNEHTSLLSSSTQDPISAASSIPPSPSGHYQGFGQTITPQTTPTATTMPEELYSADSPEADLVADHSKVPDESCNHLDS.

7 helical membrane-spanning segments follow: residues 15–35, 46–66, 84–104, 182–202, 210–230, 252–272, and 284–304; these read LVVL…IWKL, AWFI…WGIL, ILWM…YPDI, PVTT…EGDF, YLVI…VLFY, VVFV…AGVI, and VATG…AVAH. A compositionally biased stretch (polar residues) spans 369–378; sequence TSLLSSSTQD. The tract at residues 369–422 is disordered; sequence TSLLSSSTQDPISAASSIPPSPSGHYQGFGQTITPQTTPTATTMPEELYSADSP. The span at 399–411 shows a compositional bias: low complexity; that stretch reads QTITPQTTPTATT.

It belongs to the TMEM184 family.

It is found in the membrane. Functionally, may play a role in cell growth. The protein is Transmembrane protein 184C (tmem184c) of Xenopus tropicalis (Western clawed frog).